The sequence spans 279 residues: Ribosomal RNA small subunit methyltransferase A (279 aa).

Positions 12, 14, 39, 60, 81, and 118 each coordinate S-adenosyl-L-methionine.

Belongs to the class I-like SAM-binding methyltransferase superfamily. rRNA adenine N(6)-methyltransferase family. RsmA subfamily.

The protein localises to the cytoplasm. It carries out the reaction adenosine(1518)/adenosine(1519) in 16S rRNA + 4 S-adenosyl-L-methionine = N(6)-dimethyladenosine(1518)/N(6)-dimethyladenosine(1519) in 16S rRNA + 4 S-adenosyl-L-homocysteine + 4 H(+). Functionally, specifically dimethylates two adjacent adenosines (A1518 and A1519) in the loop of a conserved hairpin near the 3'-end of 16S rRNA in the 30S particle. May play a critical role in biogenesis of 30S subunits. This is Ribosomal RNA small subunit methyltransferase A from Polaromonas naphthalenivorans (strain CJ2).